A 540-amino-acid chain; its full sequence is Phosphoenolpyruvate carboxykinase (ATP) (540 aa).

R65 lines the substrate pocket. K87 is subject to N6-acetyllysine. Substrate-binding residues include Y207 and K213. Residues K213, H232, and 248–256 (GLSGTGKTT) contribute to the ATP site. Residues K213 and H232 each coordinate Mn(2+). D269 is a binding site for Mn(2+). ATP is bound by residues E297, R333, 449–450 (RI), and T455. Substrate is bound at residue R333. Residue K523 is modified to N6-acetyllysine.

This sequence belongs to the phosphoenolpyruvate carboxykinase (ATP) family. Monomer. Mn(2+) is required as a cofactor.

It is found in the cytoplasm. It carries out the reaction oxaloacetate + ATP = phosphoenolpyruvate + ADP + CO2. The protein operates within carbohydrate biosynthesis; gluconeogenesis. Its function is as follows. Involved in the gluconeogenesis. Catalyzes the conversion of oxaloacetate (OAA) to phosphoenolpyruvate (PEP) through direct phosphoryl transfer between the nucleoside triphosphate and OAA. This chain is Phosphoenolpyruvate carboxykinase (ATP), found in Escherichia coli O6:K15:H31 (strain 536 / UPEC).